Here is a 122-residue protein sequence, read N- to C-terminus: Large ribosomal subunit protein uL14 (122 aa).

It belongs to the universal ribosomal protein uL14 family. As to quaternary structure, part of the 50S ribosomal subunit. Forms a cluster with proteins L3 and L19. In the 70S ribosome, L14 and L19 interact and together make contacts with the 16S rRNA in bridges B5 and B8.

Binds to 23S rRNA. Forms part of two intersubunit bridges in the 70S ribosome. The chain is Large ribosomal subunit protein uL14 from Helicobacter hepaticus (strain ATCC 51449 / 3B1).